The sequence spans 410 residues: Auxin-induced protein 5NG4 (410 aa).

Residues 1 to 16 (MASNIMQRCNVFMSER) lie on the Cytoplasmic side of the membrane. The helical transmembrane segment at 17 to 37 (VKLHAAMLALQFGYAGFHIVS) threads the bilayer. Residues 38–47 (RAALNMGVSK) are Extracellular-facing. Residues 48–68 (VVFPVYRNILALMLIGPCAYF) form a helical membrane-spanning segment. At 69–74 (LEKKER) the chain is on the cytoplasmic side. The chain crosses the membrane as a helical span at residues 75–95 (PALTLSFLIQFFLLALCGITG). Residues 96 to 109 (QSRILSLRIVLHIP) lie on the Extracellular side of the membrane. A helical membrane pass occupies residues 110 to 130 (TFASAIQNSVPAITFIMAAAL). Topologically, residues 131-141 (RLEKVHISRRD) are cytoplasmic. A helical membrane pass occupies residues 142–162 (GLAKIIGTVACVSGATIITLY). Over 163–196 (KGPPITHIWRPNLEVTASYFKAFQGNDLSAKSEN) the chain is Extracellular. Asn-196 is a glycosylation site (N-linked (GlcNAc...) asparagine). The chain crosses the membrane as a helical span at residues 197–217 (WTLGCIYLLGNCLAWSGWIVL). The region spanning 209–338 (LAWSGWIVLQ…IIIGLYLVLW (130 aa)) is the EamA domain. Topologically, residues 218–229 (QAPVLKRYPARL) are cytoplasmic. A helical transmembrane segment spans residues 230-250 (SVTSFTCFFGVIQFLIIAAFF). Residues 251-264 (ETDLEHWKIHSGGE) lie on the Extracellular side of the membrane. The helical transmembrane segment at 265 to 285 (LFTILYAGFVASGIAFSVQIW) threads the bilayer. Residues 286 to 292 (CIDRGGP) are Cytoplasmic-facing. A helical membrane pass occupies residues 293–313 (VFVAVYQPVQTIAVAIMASII). Residues 314 to 317 (LGEQ) lie on the Extracellular side of the membrane. A helical membrane pass occupies residues 318–338 (FYLGGIFGAILIIIGLYLVLW). The Cytoplasmic segment spans residues 339-410 (GKSEEKRLGL…IPSPSDEPQP (72 aa)).

The protein belongs to the drug/metabolite transporter (DMT) superfamily. Plant drug/metabolite exporter (P-DME) (TC 2.A.7.4) family.

The protein resides in the membrane. The sequence is that of Auxin-induced protein 5NG4 from Pinus taeda (Loblolly pine).